A 90-amino-acid chain; its full sequence is Phosphocarrier protein NPr (90 aa).

The HPr domain occupies 2 to 90 (TQYRRVAIKN…ALFESGFDED (89 aa)). His16 functions as the Pros-phosphohistidine intermediate in the catalytic mechanism.

Belongs to the HPr family.

Its subcellular location is the cytoplasm. Component of the phosphoenolpyruvate-dependent nitrogen-metabolic phosphotransferase system (nitrogen-metabolic PTS), that seems to be involved in regulating nitrogen metabolism. The phosphoryl group from phosphoenolpyruvate (PEP) is transferred to the phosphoryl carrier protein NPr by enzyme I-Ntr. Phospho-NPr then transfers it to EIIA-Ntr. Could function in the transcriptional regulation of sigma-54 dependent operons in conjunction with the NPr (PtsO) and EIIA-Ntr (PtsN) proteins. This Proteus mirabilis (strain HI4320) protein is Phosphocarrier protein NPr (ptsO).